Reading from the N-terminus, the 1159-residue chain is WASH complex subunit 5 (1159 aa).

Serine 917 carries the phosphoserine modification.

Belongs to the strumpellin family. Component of the WASH core complex also described as WASH regulatory complex (SHRC) composed of WASH (WASHC1, WASH2P or WASH3P), WASHC2 (WASHC2A or WASHC2C), WASHC3, WASHC4 and WASHC5. The WASH core complex associates via WASHC2 with the F-actin-capping protein dimer (formed by CAPZA1, CAPZA2 or CAPZA3 and CAPZB) in a transient or substoichiometric manner which was initially described as WASH complex. Interacts with VCP, PI4K2A. In terms of tissue distribution, expressed ubiquitously.

It is found in the cytoplasm. The protein localises to the cytosol. Its subcellular location is the endoplasmic reticulum. The protein resides in the early endosome. Its function is as follows. Acts as a component of the WASH core complex that functions as a nucleation-promoting factor (NPF) at the surface of endosomes, where it recruits and activates the Arp2/3 complex to induce actin polymerization, playing a key role in the fission of tubules that serve as transport intermediates during endosome sorting. May be involved in axonal outgrowth. Involved in cellular localization of ADRB2. Involved in cellular trafficking of BLOC-1 complex cargos such as ATP7A and VAMP7. This Homo sapiens (Human) protein is WASH complex subunit 5.